A 736-amino-acid chain; its full sequence is Catalase-peroxidase 2 (736 aa).

Positions 91 to 227 form a cross-link, tryptophyl-tyrosyl-methioninium (Trp-Tyr) (with M-253); that stretch reads WHSAGTYRMG…LAAVQMGLIY (137 aa). The active-site Proton acceptor is the His92. A cross-link (tryptophyl-tyrosyl-methioninium (Tyr-Met) (with W-91)) is located at residues 227–253; it reads YVNPEGPDGNPDPVAAAYDIREVFGRM. His268 contacts heme b.

This sequence belongs to the peroxidase family. Peroxidase/catalase subfamily. Homodimer or homotetramer. It depends on heme b as a cofactor. Formation of the three residue Trp-Tyr-Met cross-link is important for the catalase, but not the peroxidase activity of the enzyme.

The catalysed reaction is H2O2 + AH2 = A + 2 H2O. It carries out the reaction 2 H2O2 = O2 + 2 H2O. Bifunctional enzyme with both catalase and broad-spectrum peroxidase activity. Shows peroxidase specificity towards odianisidine, ABTS and pyrogallol, but methoxyphenol and 2-chloronaphthol are not peroxidized. The polypeptide is Catalase-peroxidase 2 (Burkholderia cenocepacia (strain ATCC BAA-245 / DSM 16553 / LMG 16656 / NCTC 13227 / J2315 / CF5610) (Burkholderia cepacia (strain J2315))).